Reading from the N-terminus, the 170-residue chain is Brassinosteroid-responsive RING protein 1 (170 aa).

Residues 15–37 (LFVQTLSILGFIRTIVFSIFRFL) traverse the membrane as a helical segment. The RING-type; atypical zinc finger occupies 94 to 137 (CAVCLYEFEGEQEIRWLRNCRHIFHRSCLDRWMDHDQKTCPLCR).

Belongs to the RING-type zinc finger family. Highly expressed in stems, rosette leaves and siliques, and moderately expressed in roots, cauline leaves and flower. Detected at low levels in seeds.

It localises to the membrane. In terms of biological role, may be involved in the brassinosteroids (BRs) signaling pathway and regulate the growth and development of rosette leaves. Seems to prevent over development of leaves and inflorescence stems. The protein is Brassinosteroid-responsive RING protein 1 of Arabidopsis thaliana (Mouse-ear cress).